Consider the following 120-residue polypeptide: UPF0231 protein YacL (120 aa).

This sequence belongs to the UPF0231 family.

The polypeptide is UPF0231 protein YacL (Escherichia coli (strain SMS-3-5 / SECEC)).